Here is a 698-residue protein sequence, read N- to C-terminus: Long-chain-fatty-acid--CoA ligase 1 (698 aa).

At methionine 1 the chain carries N-acetylmethionine. A 3'-nitrotyrosine modification is found at tyrosine 9. A helical; Signal-anchor for type III membrane protein membrane pass occupies residues 25–45 (LPTNTLMGFGAFAALTTFWYA). Topologically, residues 46–698 (TRPKPLKPPC…IDDLYSTIKV (653 aa)) are cytoplasmic. The residue at position 84 (tyrosine 84) is a Phosphotyrosine. Serine 135 is a glycosylation site (O-linked (GlcNAc) serine). An N6-acetyllysine mark is found at lysine 207, lysine 356, and lysine 386. A Phosphoserine modification is found at serine 620. An N6-acetyllysine modification is found at lysine 632.

Belongs to the ATP-dependent AMP-binding enzyme family. Mg(2+) is required as a cofactor. As to expression, highly expressed in liver, heart, skeletal muscle, kidney and erythroid cells, and to a lesser extent in brain, lung, placenta and pancreas.

It is found in the mitochondrion outer membrane. Its subcellular location is the peroxisome membrane. It localises to the microsome membrane. The protein localises to the endoplasmic reticulum membrane. It catalyses the reaction a long-chain fatty acid + ATP + CoA = a long-chain fatty acyl-CoA + AMP + diphosphate. The catalysed reaction is (5Z,8Z,11Z,14Z)-eicosatetraenoate + ATP + CoA = (5Z,8Z,11Z,14Z)-eicosatetraenoyl-CoA + AMP + diphosphate. It carries out the reaction 3,7,11,15-tetramethylhexadecanoate + ATP + CoA = phytanoyl-CoA + AMP + diphosphate. The enzyme catalyses hexadecanoate + ATP + CoA = hexadecanoyl-CoA + AMP + diphosphate. It catalyses the reaction (E)-hexadec-2-enoate + ATP + CoA = (2E)-hexadecenoyl-CoA + AMP + diphosphate. The catalysed reaction is 2,6,10,14-tetramethylpentadecanoate + ATP + CoA = pristanoyl-CoA + AMP + diphosphate. It carries out the reaction 14,15-epoxy-(5Z,8Z,11Z)-eicosatrienoate + ATP + CoA = 14,15-epoxy-(5Z,8Z,11Z)-eicosatrienoyl-CoA + AMP + diphosphate. The enzyme catalyses 5-hydroxy-(6E,8Z,11Z,14Z)-eicosatetraenoate + ATP + CoA = 5-hydroxy-(6E,8Z,11Z,14Z)-eicosatetraenoyl-CoA + AMP + diphosphate. It catalyses the reaction 12-hydroxy-(5Z,8Z,10E,14Z)-eicosatetraenoate + ATP + CoA = 12-hydroxy-(5Z,8Z,10E,14Z)-eicosatetraenoyl-CoA + AMP + diphosphate. The catalysed reaction is 15-hydroxy-(5Z,8Z,11Z,13E)-eicosatetraenoate + ATP + CoA = 15-hydroxy-(5Z,8Z,11Z,13E)-eicosatetraenoyl-CoA + AMP + diphosphate. It carries out the reaction (9Z)-octadecenoate + ATP + CoA = (9Z)-octadecenoyl-CoA + AMP + diphosphate. With respect to regulation, inhibited at high temperature and by arachidonate. In terms of biological role, catalyzes the conversion of long-chain fatty acids to their active form acyl-CoAs for both synthesis of cellular lipids, and degradation via beta-oxidation. Preferentially uses palmitoleate, oleate and linoleate. Preferentially activates arachidonate than epoxyeicosatrienoic acids (EETs) or hydroxyeicosatrienoic acids (HETEs). This Homo sapiens (Human) protein is Long-chain-fatty-acid--CoA ligase 1.